The sequence spans 1438 residues: Lysophospholipase NTE1 (1438 aa).

Residues 1 to 25 (MDSDTSSADFHSTETLVSTPKYSYG) are Cytoplasmic-facing. Residues 26-46 (VLINVILLVSWTCFRVVNWFL) traverse the membrane as a helical segment. Residues 47–64 (VTLPSILLGMLSKTFQIT) are Lumenal-facing. Residues 65-85 (LSLSSILMFVVAVTAICFLVV) traverse the membrane as a helical segment. Over 86–1438 (RYKYLTRYSR…HVSLSRRNSI (1353 aa)) the chain is Cytoplasmic. Residues 432–450 (YETQTIPNESEDSPTIQRS) are compositionally biased toward polar residues. The segment at 432-464 (YETQTIPNESEDSPTIQRSSLRRRASHSTSLRK) is disordered. A nucleoside 3',5'-cyclic phosphate contacts are provided by residues 590 to 720 (GDDS…LTID) and 707 to 856 (RLKR…VANR). In terms of domain architecture, PNPLA spans 1131 to 1295 (LVLGGGGSRG…LDNLPVSEMK (165 aa)). Residues 1135–1140 (GGGSRG) carry the GXGXXG motif. The GXSXG motif lies at 1162 to 1166 (GTSIG). Ser-1164 functions as the Nucleophile in the catalytic mechanism. Asp-1282 (proton acceptor) is an active-site residue. The DGA/G motif lies at 1282–1284 (DGG).

Belongs to the NTE family.

Its subcellular location is the endoplasmic reticulum membrane. It carries out the reaction a 1-acyl-sn-glycero-3-phosphocholine + H2O = sn-glycerol 3-phosphocholine + a fatty acid + H(+). Inhibited by organophosphorus esters. Functionally, intracellular phospholipase B that catalyzes the double deacylation of phosphatidylcholine (PC) to glycerophosphocholine (GroPCho). Plays an important role in membrane lipid homeostasis. Responsible for the rapid PC turnover in response to inositol, elevated temperatures, or when choline is present in the growth medium. The protein is Lysophospholipase NTE1 (NTE1) of Meyerozyma guilliermondii (strain ATCC 6260 / CBS 566 / DSM 6381 / JCM 1539 / NBRC 10279 / NRRL Y-324) (Yeast).